Consider the following 507-residue polypeptide: Aromatase (507 aa).

Residue Cys-436 coordinates heme.

It belongs to the cytochrome P450 family. Heme serves as cofactor.

The protein localises to the membrane. The catalysed reaction is testosterone + 3 reduced [NADPH--hemoprotein reductase] + 3 O2 = 17beta-estradiol + formate + 3 oxidized [NADPH--hemoprotein reductase] + 4 H2O + 4 H(+). The enzyme catalyses androst-4-ene-3,17-dione + 3 reduced [NADPH--hemoprotein reductase] + 3 O2 = estrone + formate + 3 oxidized [NADPH--hemoprotein reductase] + 4 H2O + 4 H(+). Functionally, catalyzes the formation of aromatic C18 estrogens from C19 androgens. In Gallus gallus (Chicken), this protein is Aromatase (CYP19A1).